Reading from the N-terminus, the 492-residue chain is Fibroblast growth factor receptor substrate 3 (492 aa).

A lipid anchor (N-myristoyl glycine) is attached at Gly-2. Residues 13-115 (VPDNHPTKFK…QCNSINVMEE (103 aa)) enclose the IRS-type PTB domain. Disordered stretches follow at residues 153–173 (GEGPRFSAPRRLSTSSLRHPS), 338–455 (QLGG…SDSY), and 467–492 (SNLQRALPRDDGTARKTRHNSTDLPL).

In terms of assembly, binds NTRK1. Binds FGFR1, NGFR, GRB2, PTPN11 and ERK2. In terms of processing, phosphorylated by ULK2 in vitro. Phosphorylated on tyrosine residues upon stimulation by BFGF or NGFB.

It is found in the membrane. Its function is as follows. Adapter protein that links FGF and NGF receptors to downstream signaling pathways. Involved in the activation of MAP kinases. Down-regulates ERK2 signaling by interfering with the phosphorylation and nuclear translocation of ERK2. The chain is Fibroblast growth factor receptor substrate 3 (FRS3) from Homo sapiens (Human).